The sequence spans 608 residues: Histone-arginine methyltransferase CARM1 (608 aa).

At alanine 2 the chain carries N-acetylalanine. The tract at residues 27–138 (ATVSVFPGAR…GHTLERSVFS (112 aa)) is interaction with C9orf72. Residues 146–453 (AVQYFQFYGY…KRQSYDISIV (308 aa)) enclose the SAM-dependent MTase PRMT-type domain. S-adenosyl-L-methionine is bound by residues glutamine 159, arginine 168, glycine 192, and glutamate 214. Serine 216 carries the post-translational modification Phosphoserine. A Glycyl lysine isopeptide (Lys-Gly) (interchain with G-Cter in ubiquitin) cross-link involves residue lysine 227. The S-adenosyl-L-methionine site is built by glutamate 243 and serine 271. Residues 346–379 (RILMAKSVKYTVNFLEAKEGDLHRIEIPFKFHML) are required for nuclear translocation. The tract at residues 499–608 (TGSTYNLSSG…IPTNTMHYGS (110 aa)) is transactivation domain. A Dimethylated arginine modification is found at arginine 550.

This sequence belongs to the class I-like SAM-binding methyltransferase superfamily. Protein arginine N-methyltransferase family. In terms of assembly, homodimer. Interacts with NR1H4. Interacts with SNRPC. Interacts with the C-terminus of NCOA2/GRIP1, NCO3/ACTR and NCOA1/SRC1. Part of a complex consisting of CARM1, EP300/P300 and NCOA2/GRIP1. Interacts with FLII, TP53, myogenic factor MEF2, EP300/P300, TRIM24, CREBBP and CTNNB1. Interacts with RELA. Identified in a complex containing CARM1, TRIM24 and NCOA2/GRIP1. Interacts with NCOA3/SRC3. Interacts with SKP2. Interacts (via PH domain-like fold) with C9orf72. Interacts with PARP1; promoting PARP1 recruimtent to replication forks. As to quaternary structure, (Microbial infection) Interacts with HTLV-1 protein Tax. Post-translationally, auto-methylated on Arg-550. Methylation enhances transcription coactivator activity. Methylation is required for its role in the regulation of pre-mRNA alternative splicing. In terms of processing, phosphorylation at Ser-216 is strongly increased during mitosis, and decreases rapidly to a very low, basal level after entry into the G1 phase of the cell cycle. Phosphorylation at Ser-216 may promote location in the cytosol. Phosphorylation at Ser-216 interferes with S-adenosyl-L-methionine binding and strongly reduces methyltransferase activity. Ubiquitinated by E3 ubiquitin-protein ligase complex containing FBXO9 at Lys-227; leading to proteasomal degradation. Overexpressed in prostate adenocarcinomas and high-grade prostatic intraepithelial neoplasia.

Its subcellular location is the nucleus. The protein localises to the cytoplasm. The protein resides in the chromosome. It catalyses the reaction L-arginyl-[protein] + 2 S-adenosyl-L-methionine = N(omega),N(omega)-dimethyl-L-arginyl-[protein] + 2 S-adenosyl-L-homocysteine + 2 H(+). With respect to regulation, methylation of H3R17 (H3R17me) by CARM1 is stimulated by preacetylation of H3 'Lys-18' (H3K18ac) H3 'Lys-23' (H3K23ac) by EP300 and blocked by citrullination of H3 'Arg-17' (H3R17ci) by PADI4. Functionally, methylates (mono- and asymmetric dimethylation) the guanidino nitrogens of arginyl residues in several proteins involved in DNA packaging, transcription regulation, pre-mRNA splicing, and mRNA stability. Recruited to promoters upon gene activation together with histone acetyltransferases from EP300/P300 and p160 families, methylates histone H3 at 'Arg-17' (H3R17me), forming mainly asymmetric dimethylarginine (H3R17me2a), leading to activation of transcription via chromatin remodeling. During nuclear hormone receptor activation and TCF7L2/TCF4 activation, acts synergically with EP300/P300 and either one of the p160 histone acetyltransferases NCOA1/SRC1, NCOA2/GRIP1 and NCOA3/ACTR or CTNNB1/beta-catenin to activate transcription. During myogenic transcriptional activation, acts together with NCOA3/ACTR as a coactivator for MEF2C. During monocyte inflammatory stimulation, acts together with EP300/P300 as a coactivator for NF-kappa-B. Acts as a coactivator for PPARG, promotes adipocyte differentiation and the accumulation of brown fat tissue. Plays a role in the regulation of pre-mRNA alternative splicing by methylation of splicing factors. Also seems to be involved in p53/TP53 transcriptional activation. Methylates EP300/P300, both at 'Arg-2142', which may loosen its interaction with NCOA2/GRIP1, and at 'Arg-580' and 'Arg-604' in the KIX domain, which impairs its interaction with CREB and inhibits CREB-dependent transcriptional activation. Also methylates arginine residues in RNA-binding proteins PABPC1, ELAVL1 and ELAV4, which may affect their mRNA-stabilizing properties and the half-life of their target mRNAs. Acts as a transcriptional coactivator of ACACA/acetyl-CoA carboxylase by enriching H3R17 methylation at its promoter, thereby positively regulating fatty acid synthesis. Independently of its methyltransferase activity, involved in replication fork progression: promotes PARP1 recruitment to replication forks, leading to poly-ADP-ribosylation of chromatin at replication forks and reduced fork speed. This Homo sapiens (Human) protein is Histone-arginine methyltransferase CARM1 (CARM1).